Consider the following 205-residue polypeptide: MRYTSGAIETLIDEFARLPGIGRKTAQRLCMHMLNEPRTAAEKLAKALLDVKDRVIRCSECQNVTDRDSDPCVLCRSSGRDRTVICVVESPVDLLAFEKTGHYKGLYHVLHGVISPLDGIGPDDIKVRELLARVSRPEESLQVREVVLALNPTVEGETTSLYISRLLKPLGIAVSKIARGIPVGAELEFIDEATLSRAMEGRSAM.

The C4-type zinc-finger motif lies at 58–75; sequence CSECQNVTDRDSDPCVLC. Residues 83 to 182 enclose the Toprim domain; the sequence is TVICVVESPV…AVSKIARGIP (100 aa).

Belongs to the RecR family.

In terms of biological role, may play a role in DNA repair. It seems to be involved in an RecBC-independent recombinational process of DNA repair. It may act with RecF and RecO. This is Recombination protein RecR from Chlorobium phaeobacteroides (strain DSM 266 / SMG 266 / 2430).